We begin with the raw amino-acid sequence, 329 residues long: Ketol-acid reductoisomerase (NADP(+)) (329 aa).

The KARI N-terminal Rossmann domain maps to 1–181; it reads MKVYYEQDAN…GGTRSGVIET (181 aa). NADP(+) is bound by residues 24-27, Arg47, and 82-85; these read YGSQ and DQYQ. The active site involves His107. Position 133 (Gly133) interacts with NADP(+). One can recognise a KARI C-terminal knotted domain in the interval 182 to 327; it reads TFREETETDL…ARLRSMMPWL (146 aa). 4 residues coordinate Mg(2+): Asp190, Glu194, Glu226, and Glu230. A substrate-binding site is contributed by Ser251.

The protein belongs to the ketol-acid reductoisomerase family. Requires Mg(2+) as cofactor.

It catalyses the reaction (2R)-2,3-dihydroxy-3-methylbutanoate + NADP(+) = (2S)-2-acetolactate + NADPH + H(+). It carries out the reaction (2R,3R)-2,3-dihydroxy-3-methylpentanoate + NADP(+) = (S)-2-ethyl-2-hydroxy-3-oxobutanoate + NADPH + H(+). The protein operates within amino-acid biosynthesis; L-isoleucine biosynthesis; L-isoleucine from 2-oxobutanoate: step 2/4. Its pathway is amino-acid biosynthesis; L-valine biosynthesis; L-valine from pyruvate: step 2/4. Functionally, involved in the biosynthesis of branched-chain amino acids (BCAA). Catalyzes an alkyl-migration followed by a ketol-acid reduction of (S)-2-acetolactate (S2AL) to yield (R)-2,3-dihydroxy-isovalerate. In the isomerase reaction, S2AL is rearranged via a Mg-dependent methyl migration to produce 3-hydroxy-3-methyl-2-ketobutyrate (HMKB). In the reductase reaction, this 2-ketoacid undergoes a metal-dependent reduction by NADPH to yield (R)-2,3-dihydroxy-isovalerate. The protein is Ketol-acid reductoisomerase (NADP(+)) of Oleidesulfovibrio alaskensis (strain ATCC BAA-1058 / DSM 17464 / G20) (Desulfovibrio alaskensis).